A 20-amino-acid chain; its full sequence is Basic phospholipase A2 cannitoxin alpha chain (20 aa).

Heterotrimer of alpha, beta, and gamma chains; non-covalently linked. It depends on Ca(2+) as a cofactor. In terms of tissue distribution, expressed by the venom gland.

The protein localises to the secreted. It catalyses the reaction a 1,2-diacyl-sn-glycero-3-phosphocholine + H2O = a 1-acyl-sn-glycero-3-phosphocholine + a fatty acid + H(+). In terms of biological role, heterotrimer: Snake venom phospholipase A2 (PLA2) heterotrimer that acts as a potent presynaptic neurotoxin by blocking synaptic transmission and synaptic vesicle recycling. Enzymatic activity is essential for the neurotoxic effects. May act by binding in a calcium-dependent fashion to neurotonal pentraxin-1 (NPTX1) and neurotonal pentraxin-2 (NPTX2), but not to neuronal pentraxin receptor (NPTXR). Also binds to taipoxin-associated calcium binding protein 49 (RCN2), a protein localized in the lumen of endoplasmic reticulum. Its function is as follows. Monomer (alpha chain): Snake venom phospholipase A2 (PLA2) that possesses a low level of presynaptic activity and the same high enzymatic activity than the heterotrimer. PLA2 catalyzes the calcium-dependent hydrolysis of the 2-acyl groups in 3-sn-phosphoglycerides. The chain is Basic phospholipase A2 cannitoxin alpha chain from Oxyuranus scutellatus canni (Papuan taipan).